Consider the following 548-residue polypeptide: MNSLDQWRDTWAKVLSIQPSEIDDQDSFFDLGGDSVKAIQLLSEAAQSAINVDLQTFYDNFWNIISPQLRGENRSGPIDRGGSIATGEADDSIGLLKTDVNLEVVEKALSKVNIARESVCRMAPISSIQEFFLYLGLNGHVGLINYVYQVEGRDLKQGLARLVKHLEAKNPIFRTVMIEDDTGKFTQVQLSHSISTWTYPTDLQAYLDETMTGRQRLGASPVRYSLVLKDERHKGQNFFVISLDHTHCDAFSRYLIDKEILQILKQPTEYASLQNPERPWYGDFVKHNRAHILDEQLSRYWASYMQGATLANVHPLSEAVVGGELDGEMVEIVPIPVVSQSRGTRGQTNPSHVILAAWAMALSKHSGLKDITFGLARHGRSSDSFTDLRRVMGPLVTGTPFRVTLNDTQERTEQLLNRVKEEVLKTARWEQGMVPNIHPDAEGNPWVQSMVNLKSELYGFGNESWTGDEAEADITAIKMRRDLQQYEFKSNWAILLSTLQKQGQLRLRMYYQSQLLSHDKAQALFASFKSLIAELAAADGSLVTGLLD.

The 77-residue stretch at 1–77 (MNSLDQWRDT…QLRGENRSGP (77 aa)) folds into the Carrier domain. The residue at position 35 (S35) is an O-(pantetheine 4'-phosphoryl)serine. Residues 122 to 537 (MAPISSIQEF…FKSLIAELAA (416 aa)) form a condensation region.

This sequence belongs to the NRP synthetase family.

It functions in the pathway mycotoxin biosynthesis. Functionally, nonribosomal peptide synthetase; part of the gene cluster that mediates the biosynthesis of fumonisins B1 (FB1), B2 (FB2), B3 (FB3), and B4 (FB4), which are carcinogenic mycotoxins. Within the pathway FUM14 catalyzes esterification of CoA-activated tricarballylic acid to the C-14 and C-15 hydroxyls of the fumonisin backbone. The biosynthesis starts with the FUM1-catalyzed carbon chain assembly from one molecule of acetyl-CoA, eight molecules of malonyl-CoA, and two molecules of methionine (in S-adenosyl form). The C18 polyketide chain is released from the enzyme by a nucleophilic attack of a carbanion, which is derived from R-carbon of alanine by decarboxylation, on the carbonyl carbon of polyketide acyl chain. This step is catalyzed by the pyridoxal 5'-phosphate-dependent aminoacyl transferase FUM8. The resultant 3-keto intermediate is then stereospecifically reduced to a 3-hydroxyl product by reductase FUM13. Subsequent oxidations at C-10 by the cytochrome P450 monooxygenase FUM2, C-14 and C-15 by FUM6, FUM12 or FUM15, tricarballylic esterification of the hydroxyl groups on C-14 and C-15 by acyltransferase FUM14, and C-5 hydroxylation by 2-keto-glutarate-dependent dioxygenase FUM3 furnish the biosynthesis of fumonisins. The tricarballylic moieties are most likely derived from the citric acid cycle, and their addition to the carbon backbone may involve FUM7, FUM10, FUM11 and FUM14. This chain is Nonribosomal peptide synthetase 8, found in Gibberella moniliformis (strain M3125 / FGSC 7600) (Maize ear and stalk rot fungus).